A 593-amino-acid polypeptide reads, in one-letter code: Probable E3 ubiquitin-protein ligase ARI2 (593 aa).

Residues 120–334 (SMMSCDICVE…ISGHSCGRFQ (215 aa)) are TRIAD supradomain. 18 residues coordinate Zn(2+): C124, C127, C141, H143, C146, C149, C168, C173, C215, C221, C237, C239, C244, C247, H252, C257, C284, and C287. An RING-type 1 zinc finger spans residues 124-173 (CDICVEDVPGYQLTRMDCGHSFCNNCWTGHFTVKINEGQSKRIICMAHKC). Residues 195 to 257 (EKFDRFLLES…SSQAHSPCSC (63 aa)) form an IBR-type zinc finger. The RING-type 2; atypical zinc-finger motif lies at 284 to 312 (CPKCHKPVEKNGGCNLVTCLCRQSFCWLC). C297 is an active-site residue. Zn(2+) is bound by residues C302, C304, C309, C312, H320, and C330.

Belongs to the RBR family. Ariadne subfamily. Zn(2+) serves as cofactor. In terms of tissue distribution, ubiquitous.

The enzyme catalyses [E2 ubiquitin-conjugating enzyme]-S-ubiquitinyl-L-cysteine + [acceptor protein]-L-lysine = [E2 ubiquitin-conjugating enzyme]-L-cysteine + [acceptor protein]-N(6)-ubiquitinyl-L-lysine.. It participates in protein modification; protein ubiquitination. Its function is as follows. Might act as an E3 ubiquitin-protein ligase, or as part of E3 complex, which accepts ubiquitin from specific E2 ubiquitin-conjugating enzymes and then transfers it to substrates. In Arabidopsis thaliana (Mouse-ear cress), this protein is Probable E3 ubiquitin-protein ligase ARI2 (ARI2).